A 264-amino-acid chain; its full sequence is MLIAIDVGNTNIKFAICTSNRILKIIRIASQQAKTADQYFFYLNNIINQLNTDFKNINNIIISSVVPSITKPMLELSKNYFNINPIILDNNHADIFNIKINLQNKALGSDRLADIIAASNIYPNKDLLIIGMGTATVFNLLNKDKCIYGQVIAPGAHILAKSMRQFTALLPEVSVSKQDKVVHNNIYHAMESGVYWGYITMVNGMIEKIIKEEKKDLHVIATGGNSYLFFDHKTAINNIETDLTIKGILYLHNMLSNNTAQNSI.

6–13 (DVGNTNIK) contributes to the ATP binding site. A substrate-binding site is contributed by 108-111 (GSDR). D110 functions as the Proton acceptor in the catalytic mechanism. An ATP-binding site is contributed by T134.

The protein belongs to the type III pantothenate kinase family. As to quaternary structure, homodimer. NH4(+) serves as cofactor. The cofactor is K(+).

It is found in the cytoplasm. It carries out the reaction (R)-pantothenate + ATP = (R)-4'-phosphopantothenate + ADP + H(+). It functions in the pathway cofactor biosynthesis; coenzyme A biosynthesis; CoA from (R)-pantothenate: step 1/5. Its function is as follows. Catalyzes the phosphorylation of pantothenate (Pan), the first step in CoA biosynthesis. In Ehrlichia canis (strain Jake), this protein is Type III pantothenate kinase.